The following is a 731-amino-acid chain: Lanosterol synthase ERG7 (731 aa).

Residue T2 is modified to N-acetylthreonine. A PFTB 1 repeat occupies 125–167; that stretch reads RIELIRYIVNTAHPVDGGWGLHSVDKSTVFGTVLNYVILRLLG. Residue D456 is the Proton donor of the active site. The PFTB 2 repeat unit spans residues 615–661; that stretch reads VRKGCDFLVSKQMKDGGWGESMKSSELHSYVDSEKSLVVQTAWALIA.

The protein belongs to the terpene cyclase/mutase family.

It localises to the lipid droplet. Its subcellular location is the endoplasmic reticulum membrane. It catalyses the reaction (S)-2,3-epoxysqualene = lanosterol. It participates in terpene metabolism; lanosterol biosynthesis; lanosterol from farnesyl diphosphate: step 3/3. Catalytic activity requires the presence of ERG27. Functionally, lanosterol synthase; part of the third module of ergosterol biosynthesis pathway that includes the late steps of the pathway. ERG7 catalyzes the cyclization of (S)-2,3 oxidosqualene to lanosterol, a reaction that forms the sterol core. The third module or late pathway involves the ergosterol synthesis itself through consecutive reactions that mainly occur in the endoplasmic reticulum (ER) membrane. Firstly, the squalene synthase ERG9 catalyzes the condensation of 2 farnesyl pyrophosphate moieties to form squalene, which is the precursor of all steroids. Squalene synthase is crucial for balancing the incorporation of farnesyl diphosphate (FPP) into sterol and nonsterol isoprene synthesis. Secondly, the squalene epoxidase ERG1 catalyzes the stereospecific oxidation of squalene to (S)-2,3-epoxysqualene, which is considered to be a rate-limiting enzyme in steroid biosynthesis. Then, the lanosterol synthase ERG7 catalyzes the cyclization of (S)-2,3 oxidosqualene to lanosterol, a reaction that forms the sterol core. In the next steps, lanosterol is transformed to zymosterol through a complex process involving various demethylation, reduction and desaturation reactions. The lanosterol 14-alpha-demethylase ERG11 (also known as CYP51) catalyzes C14-demethylation of lanosterol to produce 4,4'-dimethyl cholesta-8,14,24-triene-3-beta-ol, which is critical for ergosterol biosynthesis. The C-14 reductase ERG24 reduces the C14=C15 double bond of 4,4-dimethyl-cholesta-8,14,24-trienol to produce 4,4-dimethyl-cholesta-8,24-dienol. 4,4-dimethyl-cholesta-8,24-dienol is substrate of the C-4 demethylation complex ERG25-ERG26-ERG27 in which ERG25 catalyzes the three-step monooxygenation required for the demethylation of 4,4-dimethyl and 4alpha-methylsterols, ERG26 catalyzes the oxidative decarboxylation that results in a reduction of the 3-beta-hydroxy group at the C-3 carbon to an oxo group, and ERG27 is responsible for the reduction of the keto group on the C-3. ERG28 has a role as a scaffold to help anchor ERG25, ERG26 and ERG27 to the endoplasmic reticulum and ERG29 regulates the activity of the iron-containing C4-methylsterol oxidase ERG25. Then, the sterol 24-C-methyltransferase ERG6 catalyzes the methyl transfer from S-adenosyl-methionine to the C-24 of zymosterol to form fecosterol. The C-8 sterol isomerase ERG2 catalyzes the reaction which results in unsaturation at C-7 in the B ring of sterols and thus converts fecosterol to episterol. The sterol-C5-desaturase ERG3 then catalyzes the introduction of a C-5 double bond in the B ring to produce 5-dehydroepisterol. The C-22 sterol desaturase ERG5 further converts 5-dehydroepisterol into ergosta-5,7,22,24(28)-tetraen-3beta-ol by forming the C-22(23) double bond in the sterol side chain. Finally, ergosta-5,7,22,24(28)-tetraen-3beta-ol is substrate of the C-24(28) sterol reductase ERG4 to produce ergosterol. The chain is Lanosterol synthase ERG7 from Saccharomyces cerevisiae (strain ATCC 204508 / S288c) (Baker's yeast).